The following is a 130-amino-acid chain: Ribonuclease P protein component 2 (130 aa).

It belongs to the eukaryotic/archaeal RNase P protein component 2 family. In terms of assembly, consists of a catalytic RNA component and at least 4-5 protein subunits.

The protein localises to the cytoplasm. It carries out the reaction Endonucleolytic cleavage of RNA, removing 5'-extranucleotides from tRNA precursor.. Its function is as follows. Part of ribonuclease P, a protein complex that generates mature tRNA molecules by cleaving their 5'-ends. In Methanococcus maripaludis (strain C5 / ATCC BAA-1333), this protein is Ribonuclease P protein component 2.